A 352-amino-acid chain; its full sequence is DNA polymerase IV (352 aa).

Residues 6–187 enclose the UmuC domain; sequence IIHIDADCFY…VPVKFISGIG (182 aa). Mg(2+) is bound by residues aspartate 10 and aspartate 105. Glutamate 106 is a catalytic residue.

It belongs to the DNA polymerase type-Y family. As to quaternary structure, monomer. Mg(2+) is required as a cofactor.

Its subcellular location is the cytoplasm. The catalysed reaction is DNA(n) + a 2'-deoxyribonucleoside 5'-triphosphate = DNA(n+1) + diphosphate. Poorly processive, error-prone DNA polymerase involved in untargeted mutagenesis. Copies undamaged DNA at stalled replication forks, which arise in vivo from mismatched or misaligned primer ends. These misaligned primers can be extended by PolIV. Exhibits no 3'-5' exonuclease (proofreading) activity. May be involved in translesional synthesis, in conjunction with the beta clamp from PolIII. The chain is DNA polymerase IV from Marinomonas sp. (strain MWYL1).